A 165-amino-acid chain; its full sequence is Growth arrest and DNA damage-inducible protein GADD45 alpha (165 aa).

A Phosphothreonine modification is found at Thr-2.

It belongs to the GADD45 family. As to quaternary structure, interacts with AURKA, PCNA, GADD45GIP1 and MAPK14.

It localises to the nucleus. Functionally, might affect PCNA interaction with some CDK (cell division protein kinase) complexes; stimulates DNA excision repair in vitro and inhibits entry of cells into S phase. In T-cells, functions as a regulator of p38 MAPKs by inhibiting p88 phosphorylation and activity. This is Growth arrest and DNA damage-inducible protein GADD45 alpha (GADD45A) from Felis catus (Cat).